Consider the following 930-residue polypeptide: Eisosome protein 1 (930 aa).

Disordered regions lie at residues 1 to 34 (MSLISAAADVNDASSTTSAGSVRSSAVYRKDGKP), 98 to 143 (TAVS…APKK), 516 to 544 (DNEISDSAAKHEEEEGKREELTKHKEEFD), and 637 to 930 (NNKS…KEVF). 2 stretches are compositionally biased toward low complexity: residues 13–27 (ASSTTSAGSVRSSAV) and 98–129 (TAVSSRSRSSSVTSNATVVTTSSKSTNAAVKA). 2 stretches are compositionally biased toward basic and acidic residues: residues 523–542 (AAKHEEEEGKREELTKHKEE) and 676–691 (NSDELPVKDSAEKSSE). Residues 703-715 (PAKASSPYPAKPS) show a composition bias toward low complexity. Over residues 721–731 (LPKDFKPEVKP) the composition is skewed to basic and acidic residues. Composition is skewed to low complexity over residues 740–755 (PQQGAAAGGEPASAKS) and 781–804 (PAAAATPVHPPATVKKAAPKKAAA). Polar residues-rich tracts occupy residues 849-866 (NATTKSVSTLQKPTNSGI) and 883-894 (SGHSNHTRTSVY). Residues 898 to 908 (DNSDDEDELPD) show a composition bias toward acidic residues. Over residues 919 to 930 (ADKKGSLFKEVF) the composition is skewed to basic and acidic residues.

The protein belongs to the EIS1 family.

The protein resides in the cytoplasmic granule. Its subcellular location is the cell membrane. In terms of biological role, required for normal formation of eisosomes, large cytoplasmic protein assemblies that localize to specialized domains on plasma membrane and mark the site of endocytosis. The sequence is that of Eisosome protein 1 (EIS1) from Lachancea thermotolerans (strain ATCC 56472 / CBS 6340 / NRRL Y-8284) (Yeast).